The primary structure comprises 253 residues: Indole-3-glycerol phosphate synthase (253 aa).

It belongs to the TrpC family.

It catalyses the reaction 1-(2-carboxyphenylamino)-1-deoxy-D-ribulose 5-phosphate + H(+) = (1S,2R)-1-C-(indol-3-yl)glycerol 3-phosphate + CO2 + H2O. It functions in the pathway amino-acid biosynthesis; L-tryptophan biosynthesis; L-tryptophan from chorismate: step 4/5. The polypeptide is Indole-3-glycerol phosphate synthase (Bacillus cereus (strain ZK / E33L)).